A 267-amino-acid chain; its full sequence is NH(3)-dependent NAD(+) synthetase (267 aa).

38–45 (GISGGVDS) is a binding site for ATP. Aspartate 44 contributes to the Mg(2+) binding site. A deamido-NAD(+)-binding site is contributed by arginine 123. Threonine 143 is an ATP binding site. Glutamate 148 lines the Mg(2+) pocket. The deamido-NAD(+) site is built by lysine 156 and aspartate 163. ATP is bound by residues lysine 172 and serine 193. 250–251 (HK) provides a ligand contact to deamido-NAD(+).

Belongs to the NAD synthetase family. In terms of assembly, homodimer.

It catalyses the reaction deamido-NAD(+) + NH4(+) + ATP = AMP + diphosphate + NAD(+) + H(+). It functions in the pathway cofactor biosynthesis; NAD(+) biosynthesis; NAD(+) from deamido-NAD(+) (ammonia route): step 1/1. Its function is as follows. Catalyzes the ATP-dependent amidation of deamido-NAD to form NAD. Uses ammonia as a nitrogen source. The sequence is that of NH(3)-dependent NAD(+) synthetase from Pyrobaculum aerophilum (strain ATCC 51768 / DSM 7523 / JCM 9630 / CIP 104966 / NBRC 100827 / IM2).